Reading from the N-terminus, the 162-residue chain is Phosphopantetheine adenylyltransferase (162 aa).

Position 9 (Ser-9) interacts with substrate. ATP-binding positions include 9 to 10 (SF) and His-17. Positions 41, 77, and 91 each coordinate substrate. ATP-binding positions include 92–94 (GLR), Glu-102, and 126–132 (YAFLSSS).

The protein belongs to the bacterial CoaD family. In terms of assembly, homohexamer. Requires Mg(2+) as cofactor.

The protein resides in the cytoplasm. It carries out the reaction (R)-4'-phosphopantetheine + ATP + H(+) = 3'-dephospho-CoA + diphosphate. It functions in the pathway cofactor biosynthesis; coenzyme A biosynthesis; CoA from (R)-pantothenate: step 4/5. Functionally, reversibly transfers an adenylyl group from ATP to 4'-phosphopantetheine, yielding dephospho-CoA (dPCoA) and pyrophosphate. The sequence is that of Phosphopantetheine adenylyltransferase from Parafrankia sp. (strain EAN1pec).